The chain runs to 215 residues: ATP phosphoribosyltransferase (215 aa).

It belongs to the ATP phosphoribosyltransferase family. Short subfamily. As to quaternary structure, heteromultimer composed of HisG and HisZ subunits.

Its subcellular location is the cytoplasm. It catalyses the reaction 1-(5-phospho-beta-D-ribosyl)-ATP + diphosphate = 5-phospho-alpha-D-ribose 1-diphosphate + ATP. It participates in amino-acid biosynthesis; L-histidine biosynthesis; L-histidine from 5-phospho-alpha-D-ribose 1-diphosphate: step 1/9. Its function is as follows. Catalyzes the condensation of ATP and 5-phosphoribose 1-diphosphate to form N'-(5'-phosphoribosyl)-ATP (PR-ATP). Has a crucial role in the pathway because the rate of histidine biosynthesis seems to be controlled primarily by regulation of HisG enzymatic activity. The chain is ATP phosphoribosyltransferase from Cyanothece sp. (strain PCC 7425 / ATCC 29141).